A 167-amino-acid polypeptide reads, in one-letter code: Golgin subfamily A member 7B (167 aa).

S-palmitoyl cysteine attachment occurs at residues Cys-78 and Cys-81. The interval 140 to 167 is disordered; it reads RCSSGSSSSGSSSGSGSSSAGGGGAGAR. The segment covering 142–157 has biased composition (low complexity); sequence SSGSSSSGSSSGSGSS. Positions 158 to 167 are enriched in gly residues; the sequence is SAGGGGAGAR.

It belongs to the ERF4 family. Palmitoylated by ZDHHC5. Palmitoylation is required for the maintenance of ZDHHC5 at the plasma membrane.

It is found in the cell membrane. The protein resides in the golgi apparatus membrane. Its function is as follows. Play a role in cell adhesion by regulating the plasma membrane localization of the palmitoyltransferase ZDHHC5. May be involved in protein transport from Golgi to cell surface. The protein is Golgin subfamily A member 7B (GOLGA7B) of Mus musculus (Mouse).